The following is a 219-amino-acid chain: MNRHVIIVAGGKGLRMGGDIPKQFLPVGGKPVLMRTIEAFYAFDSSMHIILVLPVSQQAYWKDLCETYHFALRHDIADGGETRFHSVKNGLAYVKGEGLVGVHDGVRPFVSREVIAGCYEAAQTKQAVIPVIDVVETVRHLTKPGSETVPRNDYKLVQTPQVFEVQLLKEAYQQEYTDAFTDDASVVEAMGREVCLVQGNRENIKLTTPFDLKIAEVLI.

It belongs to the IspD/TarI cytidylyltransferase family. IspD subfamily.

It carries out the reaction 2-C-methyl-D-erythritol 4-phosphate + CTP + H(+) = 4-CDP-2-C-methyl-D-erythritol + diphosphate. It functions in the pathway isoprenoid biosynthesis; isopentenyl diphosphate biosynthesis via DXP pathway; isopentenyl diphosphate from 1-deoxy-D-xylulose 5-phosphate: step 2/6. In terms of biological role, catalyzes the formation of 4-diphosphocytidyl-2-C-methyl-D-erythritol from CTP and 2-C-methyl-D-erythritol 4-phosphate (MEP). In Phocaeicola vulgatus (strain ATCC 8482 / DSM 1447 / JCM 5826 / CCUG 4940 / NBRC 14291 / NCTC 11154) (Bacteroides vulgatus), this protein is 2-C-methyl-D-erythritol 4-phosphate cytidylyltransferase.